Reading from the N-terminus, the 261-residue chain is Gap junction beta-6 protein (261 aa).

At 1-22 (MDWGTLHTFVGGVNKHSTSIGK) the chain is on the cytoplasmic side. The helical transmembrane segment at 23–45 (VWVTVLFVFRVMILVVAAQEVWG) threads the bilayer. Topologically, residues 46-75 (DEQEDFVCNTLQPGCRNVCYDHFFPVSHIR) are extracellular. A helical transmembrane segment spans residues 76 to 98 (LWALQLIFVSTPALLVAMHVAYY). At 99-131 (RHEAARRFRRGETRSEFKDLEDIKRQKVRIEGS) the chain is on the cytoplasmic side. Residues 132-154 (LWWTYTSSIFFRIVFEAAFMYVF) traverse the membrane as a helical segment. Residues 155-192 (YFLYNGYHLPWVLKCGIQPCPNLVDCFISRPTEKTVFT) are Extracellular-facing. A helical transmembrane segment spans residues 193–215 (IFMISASVICMLLNVAELCYLLL). The Cytoplasmic segment spans residues 216-261 (KVCFRRSKRAQTQKAPPNHALKESKQNEMNELISEGGQNAITGFPS).

Belongs to the connexin family. Beta-type (group I) subfamily. As to quaternary structure, a connexon is composed of a hexamer of connexins. Interacts with CNST.

The protein resides in the cell membrane. The protein localises to the cell junction. It localises to the gap junction. One gap junction consists of a cluster of closely packed pairs of transmembrane channels, the connexons, through which materials of low MW diffuse from one cell to a neighboring cell. The chain is Gap junction beta-6 protein (GJB6) from Bos taurus (Bovine).